Here is a 783-residue protein sequence, read N- to C-terminus: Cation/H(+) antiporter 2 (783 aa).

12 helical membrane passes run 19 to 39 (LNTMFIQMACILVFSQLFYLL), 43 to 63 (CGQAGPVAQILAGIVLSPVLL), 81 to 101 (YYSFFSFALRTSFMFLIGLEV), 121 to 141 (FVVSGLLSFASLMLFIPLFGI), 145 to 165 (YFTFFLVLLVTLSNTASPVVV), 186 to 206 (ALFIELTNVVLYTIIMAFISG), 208 to 228 (IILELFLFLLATVALILINMV), 242 to 262 (YLSKAETLVFFIFLLIIGITI), 300 to 320 (EFVLPVYFGYIGFRFSIIALT), 323 to 343 (FYLGIVIIVIVTIAGKFIGVI), 355 to 375 (YWLFLPTILSVKGHVGLLLLD), and 391 to 411 (MMVAALVITTLVSGVLASFLL).

This sequence belongs to the monovalent cation:proton antiporter 2 (CPA2) transporter (TC 2.A.37) family. CHX (TC 2.A.37.4) subfamily. Specifically expressed in pollen.

The protein localises to the membrane. Functionally, may operate as a cation/H(+) antiporter. The sequence is that of Cation/H(+) antiporter 2 (CHX2) from Arabidopsis thaliana (Mouse-ear cress).